Consider the following 945-residue polypeptide: Xylosyltransferase 1 (945 aa).

Residues 1–17 (MQAAPCARRLARRSHSA) lie on the Cytoplasmic side of the membrane. A helical; Signal-anchor for type II membrane protein membrane pass occupies residues 18 to 38 (LLAALTVLLLQTLVVWNFSSL). At 39–945 (DSGAGERRGG…GAVKPDGRLR (907 aa)) the chain is on the lumenal side. Residues 42–245 (AGERRGGAAV…KYDQPPKCDI (204 aa)) form a disordered region. Over residues 76–103 (RGGGGGGGGCGGGGRGPQARARGGGPGE) the composition is skewed to gly residues. A compositionally biased stretch (basic and acidic residues) spans 131-147 (KVRTDSNNENSVPKDFE). A compositionally biased stretch (polar residues) spans 149 to 158 (VDNSNFAPRT). The segment covering 163–190 (HQPELAKKPPSRQKELLKRKLEQQEKGK) has biased composition (basic and acidic residues). N-linked (GlcNAc...) asparagine glycosylation is present at Asn212. Over residues 235 to 245 (TKYDQPPKCDI) the composition is skewed to basic and acidic residues. Disulfide bonds link Cys243/Cys271, Cys287/Cys528, Cys547/Cys560, and Cys549/Cys558. Residues Val319, Asp347, and 376 to 378 (TIW) contribute to the UDP-alpha-D-xylose site. N-linked (GlcNAc...) asparagine glycosylation is present at Asn407. 480-481 (DW) serves as a coordination point for UDP-alpha-D-xylose. UDP-alpha-D-xylose contacts are provided by residues Ser561 and 584-585 (RK). Disulfide bonds link Cys661–Cys913 and Cys906–Cys919. An N-linked (GlcNAc...) asparagine glycan is attached at Asn763. Positions 926–945 (SFSPDPKSELGAVKPDGRLR) are disordered.

Belongs to the glycosyltransferase 14 family. XylT subfamily. Monomer. It depends on a divalent metal cation as a cofactor. In terms of processing, contains 7 disulfide bonds. Post-translationally, N-glycosylated.

It is found in the golgi apparatus membrane. The catalysed reaction is UDP-alpha-D-xylose + L-seryl-[protein] = 3-O-(beta-D-xylosyl)-L-seryl-[protein] + UDP + H(+). It functions in the pathway glycan metabolism; chondroitin sulfate biosynthesis. The protein operates within glycan metabolism; heparan sulfate biosynthesis. In terms of biological role, catalyzes the first step in the biosynthesis of chondroitin sulfate and dermatan sulfate proteoglycans, such as DCN. Transfers D-xylose from UDP-D-xylose to specific serine residues of the core protein. Required for normal maturation of chondrocytes during bone development, normal onset of ossification and normal embryonic and postnatal skeleton development, especially of the long bones. The protein is Xylosyltransferase 1 (XYLT1) of Pan troglodytes (Chimpanzee).